A 206-amino-acid polypeptide reads, in one-letter code: Ras-related protein Rab-14 (206 aa).

Residue 15 to 22 coordinates GTP; it reads GDMGVGKS. The Effector region signature appears at 37–45; that stretch reads SPHTIGVEF. Residues 63-67 and 121-124 each bind GTP; these read DTAGQ and NKKD. A disordered region spans residues 182–206; the sequence is PDGGITKNPPQTITDKPQDASKCSC. Polar residues predominate over residues 189–206; sequence NPPQTITDKPQDASKCSC. Residues C204 and C206 are each lipidated (S-geranylgeranyl cysteine). C206 is modified (cysteine methyl ester).

The protein belongs to the small GTPase superfamily. Rab family.

The protein resides in the endosome. It is found in the contractile vacuole. Its subcellular location is the membrane. The enzyme catalyses GTP + H2O = GDP + phosphate + H(+). Its activity is regulated as follows. Rab activation is generally mediated by a guanine exchange factor (GEF), while inactivation through hydrolysis of bound GTP is catalyzed by a GTPase activating protein (GAP). That Rab is activated by the DENND6A and DENND6B guanine exchange factors (GEF). Functionally, the small GTPases Rab are key regulators of intracellular membrane trafficking, from the formation of transport vesicles to their fusion with membranes. Rabs cycle between an inactive GDP-bound form and an active GTP-bound form that is able to recruit to membranes different set of downstream effectors directly responsible for vesicle formation, movement, tethering and fusion. Regulates the fusion of phagosomes and lysosomes. This Dictyostelium discoideum (Social amoeba) protein is Ras-related protein Rab-14 (rab14).